Here is a 227-residue protein sequence, read N- to C-terminus: ATP-dependent dethiobiotin synthetase BioD (227 aa).

Residue 13-18 (DIGKTY) participates in ATP binding. Thr-17 lines the Mg(2+) pocket. Residue Lys-38 is part of the active site. Ser-42 provides a ligand contact to substrate. ATP contacts are provided by residues Asp-55, 116–119 (EGSG), and 179–180 (NN). Mg(2+) is bound by residues Asp-55 and Glu-116.

It belongs to the dethiobiotin synthetase family. Homodimer. The cofactor is Mg(2+).

The protein resides in the cytoplasm. It catalyses the reaction (7R,8S)-7,8-diammoniononanoate + CO2 + ATP = (4R,5S)-dethiobiotin + ADP + phosphate + 3 H(+). It functions in the pathway cofactor biosynthesis; biotin biosynthesis; biotin from 7,8-diaminononanoate: step 1/2. Functionally, catalyzes a mechanistically unusual reaction, the ATP-dependent insertion of CO2 between the N7 and N8 nitrogen atoms of 7,8-diaminopelargonic acid (DAPA, also called 7,8-diammoniononanoate) to form a ureido ring. The polypeptide is ATP-dependent dethiobiotin synthetase BioD (Clostridium botulinum (strain Loch Maree / Type A3)).